The sequence spans 156 residues: Small ribosomal subunit protein uS7 (156 aa).

This sequence belongs to the universal ribosomal protein uS7 family. As to quaternary structure, part of the 30S ribosomal subunit. Contacts proteins S9 and S11.

In terms of biological role, one of the primary rRNA binding proteins, it binds directly to 16S rRNA where it nucleates assembly of the head domain of the 30S subunit. Is located at the subunit interface close to the decoding center, probably blocks exit of the E-site tRNA. The sequence is that of Small ribosomal subunit protein uS7 from Prochlorococcus marinus (strain MIT 9211).